A 227-amino-acid chain; its full sequence is Mediator of RNA polymerase II transcription subunit 18 (227 aa).

The protein belongs to the Mediator complex subunit 18 family. Component of the Mediator complex.

The protein localises to the nucleus. In terms of biological role, component of the Mediator complex, a coactivator involved in the regulated transcription of nearly all RNA polymerase II-dependent genes. Mediator functions as a bridge to convey information from gene-specific regulatory proteins to the basal RNA polymerase II transcription machinery. Mediator is recruited to promoters by direct interactions with regulatory proteins and serves as a scaffold for the assembly of a functional preinitiation complex with RNA polymerase II and the general transcription factors. In Caenorhabditis briggsae, this protein is Mediator of RNA polymerase II transcription subunit 18 (mdt-18).